Reading from the N-terminus, the 130-residue chain is Large ribosomal subunit protein bL17 (130 aa).

This sequence belongs to the bacterial ribosomal protein bL17 family. In terms of assembly, part of the 50S ribosomal subunit. Contacts protein L32.

This Buchnera aphidicola subsp. Acyrthosiphon pisum (strain 5A) protein is Large ribosomal subunit protein bL17.